The chain runs to 117 residues: Large ribosomal subunit protein bL20 (117 aa).

The protein belongs to the bacterial ribosomal protein bL20 family.

Binds directly to 23S ribosomal RNA and is necessary for the in vitro assembly process of the 50S ribosomal subunit. It is not involved in the protein synthesizing functions of that subunit. In Actinobacillus succinogenes (strain ATCC 55618 / DSM 22257 / CCUG 43843 / 130Z), this protein is Large ribosomal subunit protein bL20.